The primary structure comprises 4836 residues: E3 ubiquitin-protein ligase HERC2 (4836 aa).

A disordered region spans residues 58–90 (LPLRKDDGVDAQSGTKKEDLNDKEKKEEEETPA). The segment covering 72-85 (TKKEDLNDKEKKEE) has biased composition (basic and acidic residues). At threonine 273 the chain carries Phosphothreonine. The stretch at 416 to 462 (PTSHKGSLQEVIGWGLIGWKYYANVIGPIQCEGLASLGVMQVACAEK) is one RCC1 1-1 repeat. The RCC1 1-2 repeat unit spans residues 463–513 (RFLILSRNGRVYTQAYNSDMLAPQLVQGLASRNIVKIAAHSDGHHYLALAA). Residues 514-569 (TGEVYSWGCGDGGRLGHGDTVPLEEPKVISAFSGKQAGKHVVHIACGSTYSAAITA) form an RCC1 1-3 repeat. One copy of the RCC1 1-4 repeat lies at 570 to 621 (EGELYTWGRGNYGRLGHGSSEDEAIPMLVAGLKGLKVIDVACGSGDAQTLAV). One copy of the RCC1 1-5 repeat lies at 624-675 (NGQVWSWGDGDYGKLGRGGSDGCKTPKLIEKLQDLDVIKVRCGSQFSIALTK). Phosphothreonine is present on threonine 648. Residues 676 to 727 (DGQVYSWGKGDNQRLGHGTEEHVRYPKLLEGLQGKKVIDVAAGSTHCLALTE) form an RCC1 1-6 repeat. An RCC1 1-7 repeat occupies 729–779 (SEVHSWGSNDQCQHFDTLRVTKPEPTALPGLDSKHIVGIACGPAQSFAWSS). Residues 948 to 981 (ALNAAITAEIQDIEAKKEAQKEKEIDEQEASAST) are a coiled coil. In terms of domain architecture, Cytochrome b5 heme-binding spans 1208 to 1284 (VTLIRKADLE…MHAFCVGQYL (77 aa)). Position 1578 is a phosphoserine (serine 1578). Residues 1860–1933 (SGPELAAMMK…KYDLKLVELP (74 aa)) form the MIB/HERC2 domain. Phosphoserine is present on serine 1943. Position 1945 is a phosphothreonine (threonine 1945). The disordered stretch occupies residues 2351–2376 (GTGTLQTDDGAAASPDLGDMSPEGPQ). Position 2455 is a phosphoserine (serine 2455). The 77-residue stretch at 2555 to 2631 (RADFLSNDDY…RYIHVELIGY (77 aa)) folds into the CPH domain. A ZZ-type zinc finger spans residues 2704–2756 (HPGVTCDGCQTFPINGSRFKCRNCDDFDFCETCFKTKKHNTRHTFGRINEPGQ). The Zn(2+) site is built by cysteine 2709, cysteine 2712, cysteine 2724, cysteine 2727, cysteine 2733, cysteine 2736, histidine 2742, and histidine 2746. The region spanning 2760-2937 (FCGRSGKQLK…ASDNEEEEDD (178 aa)) is the DOC domain. The tract at residues 2928 to 2947 (ASDNEEEEDDKGSTGSLIRK) is disordered. Serine 2929 is modified (phosphoserine). The stretch at 2959-3010 (RTKVFVWGLNDKDQLGGLKGSKIKVPSFSETLSALNVVQVAGGSKSLFAVTV) is one RCC1 2-1 repeat. The stretch at 3011-3065 (EGKVYSCGEATNGRLGLGMSSGTVPIPRQITALSSYVVKKVAVHSGGRHATALTV) is one RCC1 2-2 repeat. One copy of the RCC1 2-3 repeat lies at 3066 to 3117 (DGKVFSWGEGDDGKLGHFSRMNCDKPRLIEALKTKRIRDIACGSSHSAALTS). One copy of the RCC1 2-4 repeat lies at 3119-3169 (GELYTWGLGEYGRLGHGDNTTQLKPKMVKVLLGHRVIQVACGSRDAQTLAL). One copy of the RCC1 2-5 repeat lies at 3172-3223 (EGLVFSWGDGDFGKLGRGGSEGCNIPQNIERLNGQGVCQIECGAQFSLALTK). One copy of the RCC1 2-6 repeat lies at 3225 to 3275 (GVVWTWGKGDYFRLGHGSDVHVRKPQVVEGLRGKKIVHVAVGALHCLAVTD). One copy of the RCC1 2-7 repeat lies at 3276–3327 (SGQVYAWGDNDHGQQGNGTTTVNRKPTLVQGLEGQKITRVACGSSHSVAWTT). Disordered stretches follow at residues 3479-3499 (DAVT…RPFI), 3517-3537 (KTKE…QSLD), and 3604-3632 (SQSG…SGTV). Positions 3480–3495 (AVTPSAVTPSAPSASS) are enriched in low complexity. Composition is skewed to polar residues over residues 3604–3613 (SQSGRLSSQP) and 3620–3631 (HPYTDDTSTSGT). The stretch at 3953 to 4004 (SGTIYGWGHNHRGQLGGIEGAKVKVPTPCEALATLRPVQLIGGEQTLFAVTA) is one RCC1 3-1 repeat. One copy of the RCC1 3-2 repeat lies at 4006–4058 (GKLYATGYGAGGRLGIGGTESVSTPTLLESIQHVFIKKVAVNSGGKHCLALSS). The RCC1 3-3 repeat unit spans residues 4060 to 4110 (GEVYSWGEAEDGKLGHGNRSPCDRPRVIESLRGIEVVDVAAGGAHSACVTA). The stretch at 4112–4164 (GDLYTWGKGRYGRLGHSDSEDQLKPKLVEALQGHRVIDIACGSGDAQTLCLTD) is one RCC1 3-4 repeat. The stretch at 4166-4216 (DTVWSWGDGDYGKLGRGGSDGCKVPMKIDSLTGLGVVKVECGSQFSVALTK) is one RCC1 3-5 repeat. An RCC1 3-6 repeat occupies 4218-4268 (GAVYTWGKGDYHRLGHGSDDHVRRPRQVQGLQGKKVIAIATGSLHCVCCTE). The stretch at 4270 to 4320 (GEVYTWGDNDEGQLGDGTTNAIQRPRLVAALQGKKVNRVACGSAHTLAWST) is one RCC1 3-7 repeat. The 338-residue stretch at 4459–4796 (DSLLLPHRVW…IHFCKSIDTD (338 aa)) folds into the HECT domain. The active-site Glycyl thioester intermediate is cysteine 4764. A disordered region spans residues 4806–4836 (EPAADDSSEDSDNEDADSFASDSTQDYLTGH). Residues 4808 to 4822 (AADDSSEDSDNEDAD) show a composition bias toward acidic residues. Phosphoserine is present on residues serine 4812, serine 4813, and serine 4816. At threonine 4829 the chain carries Phosphothreonine.

Interacts (when phosphorylated at Thr-4829 and sumoylated) with RNF8 (via FHA domain); this interaction increases after ionising radiation (IR) treatment. Interacts with XPA. Interacts with NEURL4. Via its interaction with NEURL4, may indirectly interact with CCP110 and CEP97. Post-translationally, phosphorylation at Thr-4829 is required for interaction with RNF8. Sumoylated with SUMO1 by PIAS4 in response to double-strand breaks (DSBs), promoting the interaction with RNF8. In terms of tissue distribution, highest levels are found in brain and testis with lower levels in heart, lung, liver, skeletal muscle and kidney. Little expression detected in spleen.

The protein resides in the cytoplasm. Its subcellular location is the cytoskeleton. It is found in the microtubule organizing center. The protein localises to the centrosome. It localises to the centriole. The protein resides in the nucleus. It catalyses the reaction S-ubiquitinyl-[E2 ubiquitin-conjugating enzyme]-L-cysteine + [acceptor protein]-L-lysine = [E2 ubiquitin-conjugating enzyme]-L-cysteine + N(6)-ubiquitinyl-[acceptor protein]-L-lysine.. It functions in the pathway protein modification; protein ubiquitination. In terms of biological role, E3 ubiquitin-protein ligase that regulates ubiquitin-dependent retention of repair proteins on damaged chromosomes. Recruited to sites of DNA damage in response to ionizing radiation (IR) and facilitates the assembly of UBE2N and RNF8 promoting DNA damage-induced formation of 'Lys-63'-linked ubiquitin chains. Acts as a mediator of binding specificity between UBE2N and RNF8. Involved in the maintenance of RNF168 levels. E3 ubiquitin-protein ligase that promotes the ubiquitination and proteasomal degradation of XPA which influences the circadian oscillation of DNA excision repair activity. By controlling the steady-state expression of the IGF1R receptor, indirectly regulates the insulin-like growth factor receptor signaling pathway. Also modulates iron metabolism by regulating the basal turnover of FBXL5. The chain is E3 ubiquitin-protein ligase HERC2 from Mus musculus (Mouse).